The chain runs to 92 residues: MNVEEEIQKLEEEIHRLGSLQSDGSYKVTFGVLFNDDRCANIFEALVGTLRAAKKRKIVAFPGELLLQGVHDKVEITLRPPPPPPQAVAATS.

Residue Met-1 is modified to N-acetylmethionine.

The protein belongs to the costars family.

The protein is Costars family protein ST45-2 of Eutrema halophilum (Salt cress).